The following is a 986-amino-acid chain: P3N-PIPO polyprotein (986 aa).

One can recognise a Peptidase S30 domain in the interval 141–284; that stretch reads KLTEGQMNHL…QSILNSMIQF (144 aa). Active-site for P1 proteinase activity residues include His-192, Asp-201, and Ser-235. The Involved in interaction with stylet and aphid transmission motif lies at 334-337; it reads KITC. An Involved in virions binding and aphid transmission motif is present at residues 592–594; the sequence is PTK. The 123-residue stretch at 618 to 740 folds into the Peptidase C6 domain; that stretch reads LYIAKQGYCY…ESDIKHYRVG (123 aa). Catalysis depends on for helper component proteinase activity residues Cys-626 and His-699.

It belongs to the potyviridae P3N-PIPO polyprotein family. In terms of assembly, interacts (via PIPO domain) with host PCaP1 protein; this interaction may help to anchor the movement complex to the plasma membrane from which the complex could move to the plasmodesmata. In terms of processing, potyviral RNA is expressed as two polyproteins which undergo post-translational proteolytic processing. Genome polyprotein is processed by NIa-pro, P1 and HC-pro proteinases resulting in the production of at least ten individual proteins. P3N-PIPO is cleaved by P1 and HC-pro proteinases resulting in the production of three individual proteins. The P1 proteinase and the HC-pro cleave only their respective C-termini autocatalytically.

It localises to the host cell junction. Its subcellular location is the host plasmodesma. The catalysed reaction is Hydrolyzes a Gly-|-Gly bond at its own C-terminus, commonly in the sequence -Tyr-Xaa-Val-Gly-|-Gly, in the processing of the potyviral polyprotein.. In terms of biological role, required for aphid transmission and also has proteolytic activity. Only cleaves a Gly-Gly dipeptide at its own C-terminus. Interacts with virions and aphid stylets. Acts as a suppressor of RNA-mediated gene silencing, also known as post-transcriptional gene silencing (PTGS), a mechanism of plant viral defense that limits the accumulation of viral RNAs. May have RNA-binding activity. Its function is as follows. Allows efficient cell to cell propagation, by bypassing the host cell wall barrier. Transports viral genome to neighboring plant cells directly through plasmosdesmata, without any budding. The polypeptide is P3N-PIPO polyprotein (Potato virus Y (strain N) (PVY)).